A 298-amino-acid chain; its full sequence is Acetylglutamate kinase (298 aa).

Residues 66-67 (GG), arginine 88, and asparagine 193 contribute to the substrate site.

This sequence belongs to the acetylglutamate kinase family. ArgB subfamily.

The protein localises to the cytoplasm. The catalysed reaction is N-acetyl-L-glutamate + ATP = N-acetyl-L-glutamyl 5-phosphate + ADP. The protein operates within amino-acid biosynthesis; L-arginine biosynthesis; N(2)-acetyl-L-ornithine from L-glutamate: step 2/4. Catalyzes the ATP-dependent phosphorylation of N-acetyl-L-glutamate. The protein is Acetylglutamate kinase of Methanosphaera stadtmanae (strain ATCC 43021 / DSM 3091 / JCM 11832 / MCB-3).